The following is a 359-amino-acid chain: Pyruvate dehydrogenase E1 component subunit beta, mitochondrial (359 aa).

The N-terminal 30 residues, 1–30, are a transit peptide targeting the mitochondrion; it reads MAAVSGLVRRPLREVSRLLKRRFHWTAPAA. The residue at position 67 (tyrosine 67) is a Phosphotyrosine. Glutamate 89 serves as a coordination point for thiamine diphosphate. Positions 142, 190, 191, 193, and 195 each coordinate K(+). Lysine 354 carries the N6-acetyllysine modification.

As to quaternary structure, heterotetramer of two PDHA1 and two PDHB subunits. The heterotetramer interacts with DLAT, and is part of the multimeric pyruvate dehydrogenase complex that contains multiple copies of pyruvate dehydrogenase (E1), dihydrolipoamide acetyltransferase (DLAT, E2) and lipoamide dehydrogenase (DLD, E3). These subunits are bound to an inner core composed of about 48 DLAT and 12 PDHX molecules. Interacts with DLAT. It depends on thiamine diphosphate as a cofactor.

The protein resides in the mitochondrion matrix. It catalyses the reaction N(6)-[(R)-lipoyl]-L-lysyl-[protein] + pyruvate + H(+) = N(6)-[(R)-S(8)-acetyldihydrolipoyl]-L-lysyl-[protein] + CO2. Functionally, the pyruvate dehydrogenase complex catalyzes the overall conversion of pyruvate to acetyl-CoA and CO(2), and thereby links the glycolytic pathway to the tricarboxylic cycle. This is Pyruvate dehydrogenase E1 component subunit beta, mitochondrial (PDHB) from Pongo abelii (Sumatran orangutan).